We begin with the raw amino-acid sequence, 346 residues long: Cytidine deaminase 5 (346 aa).

CMP/dCMP-type deaminase domains follow at residues T20–E148 and D183–A304. N58–E60 provides a ligand contact to substrate. H71 serves as a coordination point for Zn(2+). Residue E73 is the Proton donor of the active site. Residues C104 and C107 each coordinate Zn(2+).

This sequence belongs to the cytidine and deoxycytidylate deaminase family. As to quaternary structure, homodimer. Requires Zn(2+) as cofactor.

The enzyme catalyses cytidine + H2O + H(+) = uridine + NH4(+). It catalyses the reaction 2'-deoxycytidine + H2O + H(+) = 2'-deoxyuridine + NH4(+). This enzyme scavenges exogenous and endogenous cytidine and 2'-deoxycytidine for UMP synthesis. The chain is Cytidine deaminase 5 (CDA5) from Arabidopsis thaliana (Mouse-ear cress).